We begin with the raw amino-acid sequence, 167 residues long: LIM domain transcription factor LMO4.1 (167 aa).

Residues 1–17 (MVNNRVTESTTTAVSSN) are compositionally biased toward polar residues. A disordered region spans residues 1-20 (MVNNRVTESTTTAVSSNGGP). LIM zinc-binding domains are found at residues 22-84 (KACA…LFGS) and 86-148 (GACS…GLLS).

Acts as a positive cofactor of GATA transcription factors to establish the identity of the ventral mesoderm during gastrulation. Down-regulation in the dorsal mesoderm is necessary for the proper formation of this territory since, when present, lmo4 may bind ldb1 and restrict the availability of this cofactor for Spemman organizer transcription factors. At neurula stages, suppresses primary neuron differentiation and modulates gene expression at the Isthmic Organizer of the midbrain-hindbrain boundary. The polypeptide is LIM domain transcription factor LMO4.1 (lmo4.1) (Xenopus tropicalis (Western clawed frog)).